The chain runs to 96 residues: Carboxysome shell protein CsoS1A (96 aa).

Residues 7 to 92 (ALGMIETRGL…PHKEVEPVLT (86 aa)) form the BMC domain.

It belongs to the bacterial microcompartments protein family. CsoS1 subfamily. In terms of assembly, homohexamer with a small central pore. Forms a CsoS2-CsoS1-RuBisCO complex.

It is found in the carboxysome. In terms of biological role, one of shell proteins of the carboxysome, a polyhedral inclusion where RuBisCO (ribulose bisphosphate carboxylase, ccbL-ccbS) is sequestered. Assembles into hexamers which make sheets that form the facets of the polyhedral carboxysome. The shell probably limits the diffusion of CO(2) into and out of the carboxysome. This is Carboxysome shell protein CsoS1A from Hydrogenovibrio crunogenus (strain DSM 25203 / XCL-2) (Thiomicrospira crunogena).